A 660-amino-acid polypeptide reads, in one-letter code: Bifunctional polymyxin resistance protein ArnA (660 aa).

Positions 1-304 (MKTVVFAYHD…TLGLVQGSRL (304 aa)) are formyltransferase ArnAFT. 86–88 (HLI) lines the (6R)-10-formyltetrahydrofolate pocket. His-104 (proton donor; for formyltransferase activity) is an active-site residue. (6R)-10-formyltetrahydrofolate is bound by residues Arg-114 and 136–140 (VKRAD). The tract at residues 314 to 660 (RRTRVLILGV…RTVDLTDKPS (347 aa)) is dehydrogenase ArnADH. Residues Asp-347 and 368 to 369 (DI) contribute to the NAD(+) site. UDP-alpha-D-glucuronate-binding positions include Ala-393, Tyr-398, and 432–433 (TS). Glu-434 (proton acceptor; for decarboxylase activity) is an active-site residue. UDP-alpha-D-glucuronate contacts are provided by residues Arg-460, Asn-492, 526-535 (KLIDGGKQKR), and Tyr-613. Arg-619 functions as the Proton donor; for decarboxylase activity in the catalytic mechanism.

The protein in the N-terminal section; belongs to the Fmt family. UDP-L-Ara4N formyltransferase subfamily. This sequence in the C-terminal section; belongs to the NAD(P)-dependent epimerase/dehydratase family. UDP-glucuronic acid decarboxylase subfamily. In terms of assembly, homohexamer, formed by a dimer of trimers.

It catalyses the reaction UDP-alpha-D-glucuronate + NAD(+) = UDP-beta-L-threo-pentopyranos-4-ulose + CO2 + NADH. The catalysed reaction is UDP-4-amino-4-deoxy-beta-L-arabinose + (6R)-10-formyltetrahydrofolate = UDP-4-deoxy-4-formamido-beta-L-arabinose + (6S)-5,6,7,8-tetrahydrofolate + H(+). It functions in the pathway nucleotide-sugar biosynthesis; UDP-4-deoxy-4-formamido-beta-L-arabinose biosynthesis; UDP-4-deoxy-4-formamido-beta-L-arabinose from UDP-alpha-D-glucuronate: step 1/3. Its pathway is nucleotide-sugar biosynthesis; UDP-4-deoxy-4-formamido-beta-L-arabinose biosynthesis; UDP-4-deoxy-4-formamido-beta-L-arabinose from UDP-alpha-D-glucuronate: step 3/3. It participates in bacterial outer membrane biogenesis; lipopolysaccharide biosynthesis. Functionally, bifunctional enzyme that catalyzes the oxidative decarboxylation of UDP-glucuronic acid (UDP-GlcUA) to UDP-4-keto-arabinose (UDP-Ara4O) and the addition of a formyl group to UDP-4-amino-4-deoxy-L-arabinose (UDP-L-Ara4N) to form UDP-L-4-formamido-arabinose (UDP-L-Ara4FN). The modified arabinose is attached to lipid A and is required for resistance to polymyxin and cationic antimicrobial peptides. The sequence is that of Bifunctional polymyxin resistance protein ArnA from Escherichia coli (strain SE11).